We begin with the raw amino-acid sequence, 92 residues long: Bombyxin A-3 (92 aa).

Residues 1-19 (MKILLAIALMLSTVMWVST) form the signal peptide. Q20 is modified (pyrrolidone carboxylic acid). Cystine bridges form between C29–C79, C41–C92, and C78–C83. Positions 50 to 70 (SDAQYVSYGSAWLMPYSEGRG) are cleaved as a propeptide — c peptide like.

This sequence belongs to the insulin family. As to quaternary structure, heterodimer of a B chain and an A chain linked by two disulfide bonds.

The protein localises to the secreted. Functionally, brain peptide responsible for activation of prothoracic glands to produce ecdysone in insects. The protein is Bombyxin A-3 (BBXA3) of Bombyx mori (Silk moth).